Reading from the N-terminus, the 271-residue chain is 3-methyl-2-oxobutanoate hydroxymethyltransferase (271 aa).

Residues aspartate 51 and aspartate 90 each coordinate Mg(2+). Residues 51-52, aspartate 90, and lysine 118 each bind 3-methyl-2-oxobutanoate; that span reads DS. Glutamate 120 is a Mg(2+) binding site. Glutamate 186 (proton acceptor) is an active-site residue.

This sequence belongs to the PanB family. As to quaternary structure, homodecamer; pentamer of dimers. Requires Mg(2+) as cofactor.

It localises to the cytoplasm. It catalyses the reaction 3-methyl-2-oxobutanoate + (6R)-5,10-methylene-5,6,7,8-tetrahydrofolate + H2O = 2-dehydropantoate + (6S)-5,6,7,8-tetrahydrofolate. It functions in the pathway cofactor biosynthesis; (R)-pantothenate biosynthesis; (R)-pantoate from 3-methyl-2-oxobutanoate: step 1/2. Catalyzes the reversible reaction in which hydroxymethyl group from 5,10-methylenetetrahydrofolate is transferred onto alpha-ketoisovalerate to form ketopantoate. The chain is 3-methyl-2-oxobutanoate hydroxymethyltransferase from Xanthomonas oryzae pv. oryzae (strain PXO99A).